A 237-amino-acid polypeptide reads, in one-letter code: uncharacterized protein (237 aa).

Residues 1–27 (MKSFLRKPKFWLLLLGGLSTSSIILSA) form the signal peptide. A lipid anchor (N-palmitoyl cysteine) is attached at cysteine 28. A lipid anchor (S-diacylglycerol cysteine) is attached at cysteine 28.

The protein belongs to the MG307/MG309/MG338 family.

The protein resides in the membrane. This is an uncharacterized protein from Mycoplasma pneumoniae (strain ATCC 29342 / M129 / Subtype 1) (Mycoplasmoides pneumoniae).